The following is a 102-amino-acid chain: uncharacterized protein (102 aa).

This is an uncharacterized protein from Ictaluridae (bullhead catfishes).